An 830-amino-acid chain; its full sequence is MGSMFRSEEVALVQLFLPTAAAYTCVSRLGELGLVEFRDLNASVSAFQRRFVVDVRRCEELEKTFTFLQEEVRRAGLVLPPPKGRLPAPPPRDLLRIQEETERLAQELRDVRGNQQALRAQLHQLQLHAAVLRQGHEPQLAAAHTDGASERTPLLQAPGGPHQDLRVNFVAGAVEPHKAPALERLLWRACRGFLIASFRELEQPLEHPVTGEPATWMTFLISYWGEQIGQKIRKITDCFHCHVFPFLQQEEARLGALQQLQQQSQELQEVLGETERFLSQVLGRVLQLLPPGQVQVHKMKAVYLALNQCSVSTTHKCLIAEAWCSVRDLPALQEALRDSSMEEGVSAVAHRIPCRDMPPTLIRTNRFTASFQGIVDAYGVGRYQEVNPAPYTIITFPFLFAVMFGDVGHGLLMFLFALAMVLAENRPAVKAAQNEIWQTFFRGRYLLLLMGLFSIYTGFIYNECFSRATSIFPSGWSVAAMANQSGWSDAFLAQHTMLTLDPNVTGVFLGPYPFGIDPIWSLAANHLSFLNSFKMKMSVILGVVHMAFGVVLGVFNHVHFGQRHRLLLETLPELTFLLGLFGYLVFLVIYKWLCVWAARAASAPSILIHFINMFLFSHSPSNRLLYPRQEVVQATLVVLALAMVPILLLGTPLHLLHRHRRRLRRRPADRQEENKAGLLDLPDASVNGWSSDEEKAGGLDDEEEAELVPSEVLMHQAIHTIEFCLGCVSNTASYLRLWALSLAHAQLSEVLWAMVMRIGLGLGREVGVAAVVLVPIFAAFAVMTVAILLVMEGLSAFLHALRLHWVEFQNKFYSGTGYKLSPFTFAATDD.

At 1–385 (MGSMFRSEEV…DAYGVGRYQE (385 aa)) the chain is on the cytoplasmic side. The disordered stretch occupies residues 139 to 158 (QLAAAHTDGASERTPLLQAP). A helical transmembrane segment spans residues 386–404 (VNPAPYTIITFPFLFAVMF). Residues 405-406 (GD) are Vacuolar-facing. A helical membrane pass occupies residues 407-423 (VGHGLLMFLFALAMVLA). Over 424–438 (ENRPAVKAAQNEIWQ) the chain is Cytoplasmic. Residues 439 to 468 (TFFRGRYLLLLMGLFSIYTGFIYNECFSRA) form a helical membrane-spanning segment. At 469 to 532 (TSIFPSGWSV…AANHLSFLNS (64 aa)) the chain is on the vacuolar side. The helical transmembrane segment at 533-552 (FKMKMSVILGVVHMAFGVVL) threads the bilayer. The Cytoplasmic segment spans residues 553 to 570 (GVFNHVHFGQRHRLLLET). The helical transmembrane segment at 571–591 (LPELTFLLGLFGYLVFLVIYK) threads the bilayer. The Vacuolar segment spans residues 592 to 635 (WLCVWAARAASAPSILIHFINMFLFSHSPSNRLLYPRQEVVQAT). A helical membrane pass occupies residues 636 to 655 (LVVLALAMVPILLLGTPLHL). The Cytoplasmic portion of the chain corresponds to 656 to 720 (LHRHRRRLRR…EVLMHQAIHT (65 aa)). The tract at residues 681–701 (LPDASVNGWSSDEEKAGGLDD) is disordered. A helical membrane pass occupies residues 721-745 (IEFCLGCVSNTASYLRLWALSLAHA). Topologically, residues 746-766 (QLSEVLWAMVMRIGLGLGREV) are vacuolar. The chain crosses the membrane as a helical span at residues 767 to 807 (GVAAVVLVPIFAAFAVMTVAILLVMEGLSAFLHALRLHWVE). Topologically, residues 808–830 (FQNKFYSGTGYKLSPFTFAATDD) are cytoplasmic.

This sequence belongs to the V-ATPase 116 kDa subunit family. As to quaternary structure, V-ATPase is a heteromultimeric enzyme made up of two complexes: the ATP-hydrolytic V1 complex and the proton translocation V0 complex. The V1 complex consists of three catalytic AB heterodimers that form a heterohexamer, three peripheral stalks each consisting of EG heterodimers, one central rotor including subunits D and F, and the regulatory subunits C and H. The proton translocation complex V0 consists of the proton transport subunit a, a ring of proteolipid subunits c9c'', rotary subunit d, subunits e and f, and the accessory subunits ATP6AP1/Ac45 and ATP6AP2/PRR. Isoform long is highly expressed in osteoclastomas. Isoform short is highly expressed in thymus.

The protein localises to the membrane. Its function is as follows. Subunit of the V0 complex of vacuolar(H+)-ATPase (V-ATPase), a multisubunit enzyme composed of a peripheral complex (V1) that hydrolyzes ATP and a membrane integral complex (V0) that translocates protons. V-ATPase is responsible for acidifying and maintaining the pH of intracellular compartments and in some cell types, is targeted to the plasma membrane, where it is responsible for acidifying the extracellular environment. Seems to be directly involved in T-cell activation. This chain is V-type proton ATPase 116 kDa subunit a 3 (TCIRG1), found in Homo sapiens (Human).